The primary structure comprises 373 residues: Putative 8-amino-7-oxononanoate synthase (373 aa).

Arginine 18 contributes to the substrate binding site. 93–94 provides a ligand contact to pyridoxal 5'-phosphate; that stretch reads GF. Residue histidine 118 coordinates substrate. Pyridoxal 5'-phosphate contacts are provided by residues serine 166, 191–194, and 220–223; these read DEAH and TLSK. Lysine 223 carries the N6-(pyridoxal phosphate)lysine modification. Position 337 (threonine 337) interacts with substrate.

This sequence belongs to the class-II pyridoxal-phosphate-dependent aminotransferase family. BioF subfamily. Homodimer. Pyridoxal 5'-phosphate serves as cofactor.

The catalysed reaction is 6-carboxyhexanoyl-[ACP] + L-alanine + H(+) = (8S)-8-amino-7-oxononanoate + holo-[ACP] + CO2. The protein operates within cofactor biosynthesis; biotin biosynthesis. Catalyzes the decarboxylative condensation of pimeloyl-[acyl-carrier protein] and L-alanine to produce 8-amino-7-oxononanoate (AON), [acyl-carrier protein], and carbon dioxide. This Aquifex aeolicus (strain VF5) protein is Putative 8-amino-7-oxononanoate synthase (bioF).